We begin with the raw amino-acid sequence, 465 residues long: CCA-adding enzyme (465 aa).

The ATP site is built by Ser63 and Lys66. Ser63 and Lys66 together coordinate CTP. Mg(2+) contacts are provided by Glu75, Asp77, and Asp127. ATP-binding residues include His149, Lys171, and Tyr180. Residues His149, Lys171, and Tyr180 each contribute to the CTP site.

The protein belongs to the tRNA nucleotidyltransferase/poly(A) polymerase family. Archaeal CCA-adding enzyme subfamily. Homodimer. Mg(2+) serves as cofactor.

The catalysed reaction is a tRNA precursor + 2 CTP + ATP = a tRNA with a 3' CCA end + 3 diphosphate. It catalyses the reaction a tRNA with a 3' CCA end + 2 CTP + ATP = a tRNA with a 3' CCACCA end + 3 diphosphate. In terms of biological role, catalyzes the addition and repair of the essential 3'-terminal CCA sequence in tRNAs without using a nucleic acid template. Adds these three nucleotides in the order of C, C, and A to the tRNA nucleotide-73, using CTP and ATP as substrates and producing inorganic pyrophosphate. tRNA 3'-terminal CCA addition is required both for tRNA processing and repair. Also involved in tRNA surveillance by mediating tandem CCA addition to generate a CCACCA at the 3' terminus of unstable tRNAs. While stable tRNAs receive only 3'-terminal CCA, unstable tRNAs are marked with CCACCA and rapidly degraded. The chain is CCA-adding enzyme from Aeropyrum pernix (strain ATCC 700893 / DSM 11879 / JCM 9820 / NBRC 100138 / K1).